Here is a 465-residue protein sequence, read N- to C-terminus: Cysteine--tRNA ligase (465 aa).

Residue C30 participates in Zn(2+) binding. A 'HIGH' region motif is present at residues 32–42 (ITVYDYCHVGH). Residues C214, H239, and E243 each coordinate Zn(2+). Positions 271–275 (KMSKS) match the 'KMSKS' region motif. Position 274 (K274) interacts with ATP.

Belongs to the class-I aminoacyl-tRNA synthetase family. Monomer. Zn(2+) serves as cofactor.

The protein resides in the cytoplasm. It catalyses the reaction tRNA(Cys) + L-cysteine + ATP = L-cysteinyl-tRNA(Cys) + AMP + diphosphate. This is Cysteine--tRNA ligase from Burkholderia cenocepacia (strain ATCC BAA-245 / DSM 16553 / LMG 16656 / NCTC 13227 / J2315 / CF5610) (Burkholderia cepacia (strain J2315)).